A 414-amino-acid polypeptide reads, in one-letter code: Esterase FrsA (414 aa).

It belongs to the FrsA family.

The enzyme catalyses a carboxylic ester + H2O = an alcohol + a carboxylate + H(+). In terms of biological role, catalyzes the hydrolysis of esters. This chain is Esterase FrsA, found in Enterobacter sp. (strain 638).